The primary structure comprises 198 residues: Recombination protein RecR (198 aa).

The C4-type zinc-finger motif lies at 57–72; sequence CSICGNLTDDDPCHIC. Residues 80 to 175 enclose the Toprim domain; sequence EIILVVEDSK…KVTRLARGLA (96 aa).

This sequence belongs to the RecR family.

In terms of biological role, may play a role in DNA repair. It seems to be involved in an RecBC-independent recombinational process of DNA repair. It may act with RecF and RecO. This Streptococcus equi subsp. equi (strain 4047) protein is Recombination protein RecR.